The following is a 252-amino-acid chain: Phosphate import ATP-binding protein PstB (252 aa).

The ABC transporter domain occupies 5–247 (VKIDKLNVHF…PEKKQTEDYI (243 aa)). ATP is bound at residue 37-44 (GPSGCGKS).

This sequence belongs to the ABC transporter superfamily. Phosphate importer (TC 3.A.1.7) family. The complex is composed of two ATP-binding proteins (PstB), two transmembrane proteins (PstC and PstA) and a solute-binding protein (PstS).

The protein localises to the cell inner membrane. It carries out the reaction phosphate(out) + ATP + H2O = ADP + 2 phosphate(in) + H(+). In terms of biological role, part of the ABC transporter complex PstSACB involved in phosphate import. Responsible for energy coupling to the transport system. This is Phosphate import ATP-binding protein PstB from Geobacter metallireducens (strain ATCC 53774 / DSM 7210 / GS-15).